A 235-amino-acid polypeptide reads, in one-letter code: Urease accessory protein UreF (235 aa).

The protein belongs to the UreF family. In terms of assembly, ureD, UreF and UreG form a complex that acts as a GTP-hydrolysis-dependent molecular chaperone, activating the urease apoprotein by helping to assemble the nickel containing metallocenter of UreC. The UreE protein probably delivers the nickel.

Its subcellular location is the cytoplasm. Its function is as follows. Required for maturation of urease via the functional incorporation of the urease nickel metallocenter. The sequence is that of Urease accessory protein UreF from Pseudoalteromonas translucida (strain TAC 125).